Here is a 720-residue protein sequence, read N- to C-terminus: Putative glutamine--fructose-6-phosphate aminotransferase [isomerizing] (720 aa).

The Nucleophile; for GATase activity role is filled by cysteine 2. The region spanning 2 to 321 is the Glutamine amidotransferase type-2 domain; the sequence is CGIFGYCNFL…DNDTAHIYDG (320 aa). Positions 266-280 are enriched in polar residues; sequence STTSTFNHGSSTETP. Residues 266–285 are disordered; the sequence is STTSTFNHGSSTETPAENGL. SIS domains lie at 393-532 and 565-710; these read WLTE…DLVS and CDKK…VDLP.

It catalyses the reaction D-fructose 6-phosphate + L-glutamine = D-glucosamine 6-phosphate + L-glutamate. The protein operates within nucleotide-sugar biosynthesis; UDP-N-acetyl-alpha-D-glucosamine biosynthesis; alpha-D-glucosamine 6-phosphate from D-fructose 6-phosphate: step 1/1. In terms of biological role, involved in amino sugar synthesis (formation of chitin, supplies the amino sugars of asparagine-linked oligosaccharides of glycoproteins). The polypeptide is Putative glutamine--fructose-6-phosphate aminotransferase [isomerizing] (Saccharomyces cerevisiae (strain JAY291) (Baker's yeast)).